Consider the following 193-residue polypeptide: Chaperone protein TorD (193 aa).

This sequence belongs to the TorD/DmsD family. TorD subfamily.

The protein resides in the cytoplasm. In terms of biological role, involved in the biogenesis of TorA. Acts on TorA before the insertion of the molybdenum cofactor and, as a result, probably favors a conformation of the apoenzyme that is competent for acquiring the cofactor. The polypeptide is Chaperone protein TorD (Actinobacillus succinogenes (strain ATCC 55618 / DSM 22257 / CCUG 43843 / 130Z)).